The chain runs to 257 residues: Sulfur carrier protein FdhD (257 aa).

Catalysis depends on Cys105, which acts as the Cysteine persulfide intermediate.

This sequence belongs to the FdhD family.

It localises to the cytoplasm. Functionally, required for formate dehydrogenase (FDH) activity. Acts as a sulfur carrier protein that transfers sulfur from IscS to the molybdenum cofactor prior to its insertion into FDH. The polypeptide is Sulfur carrier protein FdhD (Saccharolobus solfataricus (strain ATCC 35092 / DSM 1617 / JCM 11322 / P2) (Sulfolobus solfataricus)).